Here is a 157-residue protein sequence, read N- to C-terminus: Probable succinate transporter subunit YjjB (157 aa).

Helical transmembrane passes span 15-35, 50-70, 87-107, and 121-141; these read ILAAIPAVGFAMVFNVPVQAL, MILMTSGLNIEWSTFMASMLV, VFTVAAVIPMFPGISAYTAMI, and LMITLLTNFLTASSIVGALSV.

It belongs to the ThrE exporter (TC 2.A.79) family. In terms of assembly, the transporter is composed of YjjB and YjjP.

Its subcellular location is the cell inner membrane. In terms of biological role, involved in succinate export with YjjP. Both proteins are required for export. The polypeptide is Probable succinate transporter subunit YjjB (Shigella dysenteriae serotype 1 (strain Sd197)).